The following is a 104-amino-acid chain: Large ribosomal subunit protein uL23 (104 aa).

The protein belongs to the universal ribosomal protein uL23 family. In terms of assembly, part of the 50S ribosomal subunit. Contacts protein L29, and trigger factor when it is bound to the ribosome.

In terms of biological role, one of the early assembly proteins it binds 23S rRNA. One of the proteins that surrounds the polypeptide exit tunnel on the outside of the ribosome. Forms the main docking site for trigger factor binding to the ribosome. The polypeptide is Large ribosomal subunit protein uL23 (Rhodospirillum rubrum (strain ATCC 11170 / ATH 1.1.1 / DSM 467 / LMG 4362 / NCIMB 8255 / S1)).